Reading from the N-terminus, the 386-residue chain is Phosphomevalonate dehydratase large subunit (386 aa).

7 residues coordinate (R)-5-phosphomevalonate: glycine 48, valine 49, serine 50, asparagine 53, arginine 63, asparagine 79, and proline 80. Cysteine 110 lines the [4Fe-4S] cluster pocket. Glutamate 129 and serine 130 together coordinate (R)-5-phosphomevalonate. Cysteine 283 and cysteine 342 together coordinate [4Fe-4S] cluster. Lysine 361 provides a ligand contact to (R)-5-phosphomevalonate.

It belongs to the AcnX type II large subunit family. As to quaternary structure, heterodimer composed of a large subunit (PMDh-L) and a small subunit (PMDh-S). It depends on [4Fe-4S] cluster as a cofactor.

It catalyses the reaction (R)-5-phosphomevalonate = (2E)-3-methyl-5-phosphooxypent-2-enoate + H2O. It functions in the pathway isoprenoid biosynthesis; isopentenyl diphosphate biosynthesis via mevalonate pathway. Component of a hydro-lyase that catalyzes the dehydration of mevalonate 5-phosphate (MVA5P) to form trans-anhydromevalonate 5-phosphate (tAHMP). Involved in the archaeal mevalonate (MVA) pathway, which provides fundamental precursors for isoprenoid biosynthesis, such as isopentenyl diphosphate (IPP) and dimethylallyl diphosphate (DMAPP). In Thermococcus kodakarensis (strain ATCC BAA-918 / JCM 12380 / KOD1) (Pyrococcus kodakaraensis (strain KOD1)), this protein is Phosphomevalonate dehydratase large subunit.